A 361-amino-acid polypeptide reads, in one-letter code: 1D-myo-inositol 2-acetamido-2-deoxy-alpha-D-glucopyranoside deacetylase (361 aa).

Residues 1 to 12 (MTTTPQPPPQPD) show a composition bias toward pro residues. Residues 1–27 (MTTTPQPPPQPDETPEGAAGAATAGRD) form a disordered region. The span at 16–25 (EGAAGAATAG) shows a compositional bias: low complexity. Residues His-66, Asp-69, and His-207 each coordinate Zn(2+).

It belongs to the MshB deacetylase family. Zn(2+) serves as cofactor.

It catalyses the reaction 1D-myo-inositol 2-acetamido-2-deoxy-alpha-D-glucopyranoside + H2O = 1D-myo-inositol 2-amino-2-deoxy-alpha-D-glucopyranoside + acetate. In terms of biological role, catalyzes the deacetylation of 1D-myo-inositol 2-acetamido-2-deoxy-alpha-D-glucopyranoside (GlcNAc-Ins) in the mycothiol biosynthesis pathway. This chain is 1D-myo-inositol 2-acetamido-2-deoxy-alpha-D-glucopyranoside deacetylase, found in Kineococcus radiotolerans (strain ATCC BAA-149 / DSM 14245 / SRS30216).